The primary structure comprises 295 residues: Small ribosomal subunit protein uS2 (295 aa).

It belongs to the universal ribosomal protein uS2 family. Component of the small ribosomal subunit. Mature ribosomes consist of a small (40S) and a large (60S) subunit. The 40S subunit contains about 33 different proteins and 1 molecule of RNA (18S). The 60S subunit contains about 49 different proteins and 3 molecules of RNA (25S, 5.8S and 5S). Interacts with RPS21.

It localises to the cytoplasm. In terms of biological role, required for the assembly and/or stability of the 40S ribosomal subunit. Required for the processing of the 20S rRNA-precursor to mature 18S rRNA in a late step of the maturation of 40S ribosomal subunits. The polypeptide is Small ribosomal subunit protein uS2 (Paracoccidioides brasiliensis (strain Pb18)).